The sequence spans 394 residues: Flap endonuclease 1 (394 aa).

The segment at methionine 1 to lysine 104 is N-domain. Residue aspartate 34 participates in Mg(2+) binding. Arginine 47 and arginine 70 together coordinate DNA. Mg(2+)-binding residues include aspartate 86, glutamate 158, glutamate 160, aspartate 179, and aspartate 181. Residues aspartate 122–histidine 253 are I-domain. Residue glutamate 158 coordinates DNA. Glycine 231 and aspartate 233 together coordinate DNA. Mg(2+) is bound at residue aspartate 233. The interval glutamine 341 to phenylalanine 349 is interaction with PCNA. Basic and acidic residues predominate over residues glutamate 356–glutamate 383. Positions glutamate 356–alanine 394 are disordered. Residues lysine 384–alanine 394 are compositionally biased toward basic residues.

It belongs to the XPG/RAD2 endonuclease family. FEN1 subfamily. As to quaternary structure, interacts with PCNA. Three molecules of dnr-8/fen1 bind to one PCNA trimer with each molecule binding to one PCNA monomer. PCNA stimulates the nuclease activity without altering cleavage specificity. The cofactor is Mg(2+). Phosphorylated. Phosphorylation upon DNA damage induces relocalization to the nuclear plasma.

The protein resides in the nucleus. It is found in the nucleolus. The protein localises to the nucleoplasm. Its subcellular location is the mitochondrion. In terms of biological role, structure-specific nuclease with 5'-flap endonuclease and 5'-3' exonuclease activities involved in DNA replication and repair. During DNA replication, cleaves the 5'-overhanging flap structure that is generated by displacement synthesis when DNA polymerase encounters the 5'-end of a downstream Okazaki fragment. It enters the flap from the 5'-end and then tracks to cleave the flap base, leaving a nick for ligation. Also involved in the long patch base excision repair (LP-BER) pathway, by cleaving within the apurinic/apyrimidinic (AP) site-terminated flap. Acts as a genome stabilization factor that prevents flaps from equilibrating into structures that lead to duplications and deletions. Also possesses 5'-3' exonuclease activity on nicked or gapped double-stranded DNA, and exhibits RNase H activity. Also involved in replication and repair of rDNA and in repairing mitochondrial DNA. This is Flap endonuclease 1 (dnr-8) from Neurospora crassa (strain ATCC 24698 / 74-OR23-1A / CBS 708.71 / DSM 1257 / FGSC 987).